A 211-amino-acid chain; its full sequence is Endo-1,4-beta-xylanase 5 (211 aa).

A signal peptide spans 1 to 16 (MKVTAAFASLLLTAFA). The GH11 domain occupies 19 to 210 (APEPVLVSRS…GVGSASVTIS (192 aa)). The active-site Nucleophile is Glu-106. The active-site Proton donor is Glu-197.

This sequence belongs to the glycosyl hydrolase 11 (cellulase G) family.

The protein resides in the secreted. It carries out the reaction Endohydrolysis of (1-&gt;4)-beta-D-xylosidic linkages in xylans.. It functions in the pathway glycan degradation; xylan degradation. Functionally, endo-1,4-beta-xylanase involved in the hydrolysis of xylan, a major structural heterogeneous polysaccharide found in plant biomass representing the second most abundant polysaccharide in the biosphere, after cellulose. The polypeptide is Endo-1,4-beta-xylanase 5 (XYN5) (Aspergillus niger).